The sequence spans 159 residues: MKVKLICVGKLKERYLKDGISEYQKRLSRFCQFEMIELTDERTPDKASFADNQLIMSKEAQRIHKKIEERDFVIALAIEGKQFPSETFSELISGVTVKGYSTITFIIGGSLGLDSIIKKRANMLMSFGLLTLPHQLMRLVLTEQIYRAFMITQGSPYHK.

Residues L76, G108, and 127–132 (FGLLTL) each bind S-adenosyl-L-methionine.

Belongs to the RNA methyltransferase RlmH family. Homodimer.

The protein localises to the cytoplasm. It catalyses the reaction pseudouridine(1915) in 23S rRNA + S-adenosyl-L-methionine = N(3)-methylpseudouridine(1915) in 23S rRNA + S-adenosyl-L-homocysteine + H(+). Specifically methylates the pseudouridine at position 1915 (m3Psi1915) in 23S rRNA. In Streptococcus pyogenes serotype M12 (strain MGAS2096), this protein is Ribosomal RNA large subunit methyltransferase H.